Consider the following 259-residue polypeptide: Bisphosphoglycerate mutase (259 aa).

Ser-2 carries the post-translational modification N-acetylserine. Substrate contacts are provided by residues 10 to 17, 23 to 24, Arg-62, 89 to 92, Arg-100, and 116 to 117; these read RHGEGAWN, CS, ERHY, and RR. His-11 functions as the Tele-phosphohistidine intermediate in the catalytic mechanism. Glu-89 acts as the Proton donor/acceptor in catalysis. At Thr-122 the chain carries Phosphothreonine. 189–190 is a binding site for substrate; that stretch reads GN.

It belongs to the phosphoglycerate mutase family. BPG-dependent PGAM subfamily. Homodimer. In terms of tissue distribution, expressed in red blood cells.

It carries out the reaction (2R)-3-phospho-glyceroyl phosphate = (2R)-2,3-bisphosphoglycerate + H(+). The catalysed reaction is (2R)-2-phosphoglycerate = (2R)-3-phosphoglycerate. At alkaline pH BPGM favors the synthase reaction; however, at lower pH the phosphatase reaction is dominant. Inhibited by citrate. Its function is as follows. Plays a major role in regulating hemoglobin oxygen affinity by controlling the levels of its allosteric effector 2,3-bisphosphoglycerate (2,3-BPG). Also exhibits mutase (EC 5.4.2.11) activity. The protein is Bisphosphoglycerate mutase (BPGM) of Oryctolagus cuniculus (Rabbit).